Here is a 195-residue protein sequence, read N- to C-terminus: Large ribosomal subunit protein uL5 (195 aa).

The protein belongs to the universal ribosomal protein uL5 family. Part of the 50S ribosomal subunit; part of the 5S rRNA/L5/L18/L25 subcomplex. Contacts the 5S rRNA and the P site tRNA. Forms a bridge to the 30S subunit in the 70S ribosome.

This is one of the proteins that bind and probably mediate the attachment of the 5S RNA into the large ribosomal subunit, where it forms part of the central protuberance. In the 70S ribosome it contacts protein S13 of the 30S subunit (bridge B1b), connecting the 2 subunits; this bridge is implicated in subunit movement. Contacts the P site tRNA; the 5S rRNA and some of its associated proteins might help stabilize positioning of ribosome-bound tRNAs. This is Large ribosomal subunit protein uL5 from Chlorobium chlorochromatii (strain CaD3).